A 403-amino-acid chain; its full sequence is Argininosuccinate synthase (403 aa).

Residues 13–21 and Ala-40 contribute to the ATP site; that span reads AYSGGLDTS. Positions 91 and 96 each coordinate L-citrulline. Residue Gly-121 participates in ATP binding. L-aspartate is bound by residues Thr-123, Asn-127, and Asp-128. Asn-127 provides a ligand contact to L-citrulline. Residues Arg-131, Ser-180, Ser-189, Glu-265, and Tyr-277 each coordinate L-citrulline.

It belongs to the argininosuccinate synthase family. Type 1 subfamily. In terms of assembly, homotetramer.

It is found in the cytoplasm. The enzyme catalyses L-citrulline + L-aspartate + ATP = 2-(N(omega)-L-arginino)succinate + AMP + diphosphate + H(+). The protein operates within amino-acid biosynthesis; L-arginine biosynthesis; L-arginine from L-ornithine and carbamoyl phosphate: step 2/3. This is Argininosuccinate synthase from Leptospira borgpetersenii serovar Hardjo-bovis (strain JB197).